A 409-amino-acid polypeptide reads, in one-letter code: ATPase ASNA1 homolog (409 aa).

Residue 21-28 (KGGVGKTT) coordinates ATP. Asp62 is a catalytic residue. The ATP site is built by Glu303 and Asn330. Positions 342 and 345 each coordinate Zn(2+).

It belongs to the arsA ATPase family. In terms of assembly, homodimer.

The protein localises to the cytoplasm. The protein resides in the endoplasmic reticulum. Functionally, ATPase required for the post-translational delivery of tail-anchored (TA) proteins to the endoplasmic reticulum. Recognizes and selectively binds the transmembrane domain of TA proteins in the cytosol. This complex then targets to the endoplasmic reticulum by membrane-bound receptors, where the tail-anchored protein is released for insertion. This process is regulated by ATP binding and hydrolysis. ATP binding drives the homodimer towards the closed dimer state, facilitating recognition of newly synthesized TA membrane proteins. ATP hydrolysis is required for insertion. Subsequently, the homodimer reverts towards the open dimer state, lowering its affinity for the membrane-bound receptor, and returning it to the cytosol to initiate a new round of targeting. This is ATPase ASNA1 homolog from Leishmania infantum.